Here is a 94-residue protein sequence, read N- to C-terminus: Large ribosomal subunit protein bL25 (94 aa).

This sequence belongs to the bacterial ribosomal protein bL25 family. In terms of assembly, part of the 50S ribosomal subunit; part of the 5S rRNA/L5/L18/L25 subcomplex. Contacts the 5S rRNA. Binds to the 5S rRNA independently of L5 and L18.

In terms of biological role, this is one of the proteins that binds to the 5S RNA in the ribosome where it forms part of the central protuberance. This Escherichia coli O157:H7 protein is Large ribosomal subunit protein bL25.